The chain runs to 453 residues: 5-hydroxytryptamine receptor 1 (453 aa).

At 1–36 (MKSLKSSTHDVPHPEHVVWAPPAYDEQHHLFFSHGT) the chain is on the extracellular side. Residues 37 to 57 (VLIGIVGSLIITVAVVGNVLV) traverse the membrane as a helical segment. The Cytoplasmic segment spans residues 58-74 (CLAIFTEPILSHSKSNF). The helical transmembrane segment at 75–94 (FIVSLAVADLLLALLVMTFA) threads the bilayer. Residues 95 to 110 (LVNDMYGYWLFGETFC) are Extracellular-facing. Residues Cys-110 and Cys-225 are joined by a disulfide bond. The chain crosses the membrane as a helical span at residues 111 to 133 (FIWMSADVMCETASIFSICVISY). Residues 134-153 (DRLKQVQKPLHYEEFMTTTR) are Cytoplasmic-facing. Residues 154–175 (ALLIIACLWICSFVLSFVPIFL) traverse the membrane as a helical segment. Residues 176–223 (EWHELSVEEIKAIFKDNKTEKEKALEAHNFSSALNQTLGDNQKSNAKH) lie on the Extracellular side of the membrane. The helical transmembrane segment at 224–244 (VCLFDVHFTYSVIYSFICFYV) threads the bilayer. Residues 245 to 301 (PCTLMLTNYLRLFLIAQTHQVRIRSLQMTNPPQLRGQGASSYRNQGTQGSKAARTLT) lie on the Cytoplasmic side of the membrane. A helical transmembrane segment spans residues 302–322 (IITGTFLACWLPFFIINPIAA). Over 323 to 331 (ADEHLIPLE) the chain is Extracellular. Residues 332–352 (CFMVTIWLGYFNSSVNPIIYG) traverse the membrane as a helical segment. The Cytoplasmic portion of the chain corresponds to 353–453 (TSNSKFRAAF…VFDSDTAFSS (101 aa)). The disordered stretch occupies residues 397–428 (DLSSSEHPSDACDTGRGKNSKGGDCATADPTK). Residues 403 to 412 (HPSDACDTGR) are compositionally biased toward basic and acidic residues.

Belongs to the G-protein coupled receptor 1 family. Reproductive system.

The protein resides in the cell membrane. In terms of biological role, this is one of the several different receptors for 5-hydroxytryptamine (serotonin). 5-HT plays important roles in various behavioral and physiological processes in aplysia. These include feeding, locomotion, circadian rhythm, learning and memory, synaptic plasticity, and synaptic growth. This receptor is mediated by G proteins that stimulate phospholipase C. This Aplysia californica (California sea hare) protein is 5-hydroxytryptamine receptor 1 (5HTB1).